A 207-amino-acid polypeptide reads, in one-letter code: Cytochrome c biogenesis ATP-binding export protein CcmA (207 aa).

The region spanning Leu2–Gly204 is the ABC transporter domain. Position 34–41 (Gly34–Thr41) interacts with ATP.

This sequence belongs to the ABC transporter superfamily. CcmA exporter (TC 3.A.1.107) family. As to quaternary structure, the complex is composed of two ATP-binding proteins (CcmA) and two transmembrane proteins (CcmB).

It is found in the cell inner membrane. The catalysed reaction is heme b(in) + ATP + H2O = heme b(out) + ADP + phosphate + H(+). Functionally, part of the ABC transporter complex CcmAB involved in the biogenesis of c-type cytochromes; once thought to export heme, this seems not to be the case, but its exact role is uncertain. Responsible for energy coupling to the transport system. The chain is Cytochrome c biogenesis ATP-binding export protein CcmA from Vibrio cholerae serotype O1 (strain ATCC 39315 / El Tor Inaba N16961).